A 938-amino-acid chain; its full sequence is Isoleucine--tRNA ligase (938 aa).

The 'HIGH' region motif lies at 58-68; sequence PYANGSIHIGH. Lys183 carries the N6-acetyllysine modification. L-isoleucyl-5'-AMP is bound at residue Glu561. Positions 602–606 match the 'KMSKS' region motif; that stretch reads KMSKS. ATP is bound at residue Lys605. 4 residues coordinate Zn(2+): Cys901, Cys904, Cys921, and Cys924.

This sequence belongs to the class-I aminoacyl-tRNA synthetase family. IleS type 1 subfamily. As to quaternary structure, monomer. Zn(2+) serves as cofactor.

Its subcellular location is the cytoplasm. It catalyses the reaction tRNA(Ile) + L-isoleucine + ATP = L-isoleucyl-tRNA(Ile) + AMP + diphosphate. Catalyzes the attachment of isoleucine to tRNA(Ile). As IleRS can inadvertently accommodate and process structurally similar amino acids such as valine, to avoid such errors it has two additional distinct tRNA(Ile)-dependent editing activities. One activity is designated as 'pretransfer' editing and involves the hydrolysis of activated Val-AMP. The other activity is designated 'posttransfer' editing and involves deacylation of mischarged Val-tRNA(Ile). The protein is Isoleucine--tRNA ligase of Shigella boydii serotype 4 (strain Sb227).